Consider the following 363-residue polypeptide: Type 3 secretion system translocon protein SctB (363 aa).

Residues 99–120 (ISSLSSNAVSLIISVAVLLSAL) traverse the membrane as a helical segment.

This sequence belongs to the SctB/SipC family. As to quaternary structure, the core secretion machinery of the T3SS is composed of approximately 20 different proteins, including cytoplasmic components, a base, an export apparatus and a needle. This subunit is involved in the formation of a pore, called the translocon, in host membrane.

The protein localises to the secreted. Its subcellular location is the host membrane. In terms of biological role, component of the type III secretion system (T3SS), also called injectisome, which is used to inject bacterial effector proteins into eukaryotic host cells. IpaB/SctE and IpaC/SctB are inserted into the host membrane where they form a pore and allow the translocation of effector proteins into the cytosol of target cells. This Shigella dysenteriae protein is Type 3 secretion system translocon protein SctB.